Reading from the N-terminus, the 113-residue chain is Large ribosomal subunit protein uL22 (113 aa).

The protein belongs to the universal ribosomal protein uL22 family. As to quaternary structure, part of the 50S ribosomal subunit.

Its function is as follows. This protein binds specifically to 23S rRNA; its binding is stimulated by other ribosomal proteins, e.g. L4, L17, and L20. It is important during the early stages of 50S assembly. It makes multiple contacts with different domains of the 23S rRNA in the assembled 50S subunit and ribosome. In terms of biological role, the globular domain of the protein is located near the polypeptide exit tunnel on the outside of the subunit, while an extended beta-hairpin is found that lines the wall of the exit tunnel in the center of the 70S ribosome. In Symbiobacterium thermophilum (strain DSM 24528 / JCM 14929 / IAM 14863 / T), this protein is Large ribosomal subunit protein uL22.